The following is a 126-amino-acid chain: FCS-Like Zinc finger 7 (126 aa).

The FLZ-type zinc-finger motif lies at 72–116; it reads SFLVNCGFCKRGLAPGRDIYMYKGDAAFCSIECREQQMEHDEGKT.

This sequence belongs to the FLZ family. Interacts with KIN10 and KIN11 via its FLZ-type zinc finger domain. Interacts with KINB3 via its N-terminal part. Forms homodimer and heterodimer with FLZ1, FLZ2 and FLZ15 in vitro.

The protein resides in the cytoplasm. It localises to the nucleus. May act as an adapter to facilitate the interaction of SnRK1 complex with effector proteins, conferring tissue- and stimulus-type specific differences in the SnRK1 regulation pathway. This chain is FCS-Like Zinc finger 7, found in Arabidopsis thaliana (Mouse-ear cress).